The following is a 402-amino-acid chain: NAD-dependent protein deacetylase sirtuin-7 (402 aa).

2 disordered regions span residues 1–25 (MAAGGGLSRSERKAAERVRRLREEQ) and 59–78 (VTELQGRSRRREGLKRRQEE). The segment covering 9–25 (RSERKAAERVRRLREEQ) has biased composition (basic and acidic residues). Residues 83–330 (PEELRRKVRE…RLLMDELGLE (248 aa)) form the Deacetylase sirtuin-type domain. NAD(+) contacts are provided by residues 108 to 127 (GAGISTAASIPDYRGPNGVW) and 168 to 171 (QNCD). The active-site Proton acceptor is His-188. Residues Cys-196, Cys-199, Cys-226, and Cys-229 each coordinate Zn(2+). Residues 269–271 (GSS), 298–300 (NLQ), and Cys-316 each bind NAD(+). Positions 355–385 (SHSRKSLCRSREEPPPGDQSAPLASATPILG) are disordered. Asymmetric dimethylarginine; alternate is present on Arg-390. At Arg-390 the chain carries Omega-N-methylarginine; alternate.

It belongs to the sirtuin family. Class IV subfamily. In terms of assembly, interacts with UBTF and the RNA polymerase I complex. Interacts with components of the B-WICH complex, such as MYBBP1A, SMARCA5/SNF2H and BAZ1B/WSTF. Interacts with ELK4, leading to stabilization at target promoters for H3K18Ac deacetylation. Interacts with histone H2A and/or histone H2B. Interacts with DNMT1. Interacts with SIRT1. Zn(2+) is required as a cofactor. Post-translationally, phosphorylated during mitosis. Methylation at Arg-390 by PRMT6 inhibits the H3K18Ac histone deacetylase activity, promoting mitochondria biogenesis and maintaining mitochondria respiration. In terms of processing, ubiquitinated via 'Lys-63'-linked ubiquitin chains. Deubiquitinated by USP7, inhibiting the H3K18Ac histone deacetylase activity and regulating gluconeogenesis. Ubiquitinated by E3 ubiquitin-protein ligase complex containing FBXO7; leading to proteasomal degradation.

The protein resides in the nucleus. It localises to the nucleolus. It is found in the nucleoplasm. The protein localises to the chromosome. Its subcellular location is the cytoplasm. It carries out the reaction N(6)-acetyl-L-lysyl-[protein] + NAD(+) + H2O = 2''-O-acetyl-ADP-D-ribose + nicotinamide + L-lysyl-[protein]. It catalyses the reaction N(6)-glutaryl-L-lysyl-[protein] + NAD(+) + H2O = 2''-O-glutaryl-ADP-D-ribose + nicotinamide + L-lysyl-[protein]. The catalysed reaction is N(6)-succinyl-L-lysyl-[protein] + NAD(+) + H2O = 2''-O-succinyl-ADP-D-ribose + nicotinamide + L-lysyl-[protein]. The enzyme catalyses N(6)-propanoyl-L-lysyl-[protein] + NAD(+) + H2O = 3''-O-propanoyl-ADP-D-ribose + nicotinamide + L-lysyl-[protein]. It carries out the reaction N(6)-decanoyl-L-lysyl-[protein] + NAD(+) + H2O = 2''-O-decanoyl-ADP-D-ribose + nicotinamide + L-lysyl-[protein]. Its activity is regulated as follows. NAD-dependent protein-lysine deacetylase and deacylase activities are activated by nucleic acids. Histone deacetylase activity is activated by DNA. Protein-lysine deacylase activity is activated by RNA. H3K18Ac histone deacetylase activity is inhibited by methylation at Arg-390. H3K18Ac histone deacetylase activity is inhibited by deubiquitination by USP7. Functionally, NAD-dependent protein-lysine deacylase that can act both as a deacetylase or deacylase (desuccinylase, depropionylase, deglutarylase and dedecanoylase), depending on the context. Specifically mediates deacetylation of histone H3 at 'Lys-18' (H3K18Ac). In contrast to other histone deacetylases, displays strong preference for a specific histone mark, H3K18Ac, directly linked to control of gene expression. H3K18Ac is mainly present around the transcription start site of genes and has been linked to activation of nuclear hormone receptors; SIRT7 thereby acts as a transcription repressor. Moreover, H3K18 hypoacetylation has been reported as a marker of malignancy in various cancers and seems to maintain the transformed phenotype of cancer cells. Also able to mediate deacetylation of histone H3 at 'Lys-36' (H3K36Ac) in the context of nucleosomes. Also mediates deacetylation of non-histone proteins, such as ATM, CDK9, DDX21, DDB1, FBL, FKBP5/FKBP51, GABPB1, RAN, RRP9/U3-55K and POLR1E/PAF53. Enriched in nucleolus where it stimulates transcription activity of the RNA polymerase I complex. Acts by mediating the deacetylation of the RNA polymerase I subunit POLR1E/PAF53, thereby promoting the association of RNA polymerase I with the rDNA promoter region and coding region. In response to metabolic stress, SIRT7 is released from nucleoli leading to hyperacetylation of POLR1E/PAF53 and decreased RNA polymerase I transcription. Required to restore the transcription of ribosomal RNA (rRNA) at the exit from mitosis. Promotes pre-ribosomal RNA (pre-rRNA) cleavage at the 5'-terminal processing site by mediating deacetylation of RRP9/U3-55K, a core subunit of the U3 snoRNP complex. Mediates 'Lys-37' deacetylation of Ran, thereby regulating the nuclear export of NF-kappa-B subunit RELA/p65. Acts as a regulator of DNA damage repair by mediating deacetylation of ATM during the late stages of DNA damage response, promoting ATM dephosphorylation and deactivation. Suppresses the activity of the DCX (DDB1-CUL4-X-box) E3 ubiquitin-protein ligase complexes by mediating deacetylation of DDB1, which prevents the interaction between DDB1 and CUL4 (CUL4A or CUL4B). Activates RNA polymerase II transcription by mediating deacetylation of CDK9, thereby promoting 'Ser-2' phosphorylation of the C-terminal domain (CTD) of RNA polymerase II. Deacetylates FBL, promoting histone-glutamine methyltransferase activity of FBL. Acts as a regulator of mitochondrial function by catalyzing deacetylation of GABPB1. Regulates Akt/AKT1 activity by mediating deacetylation of FKBP5/FKBP51. Required to prevent R-loop-associated DNA damage and transcription-associated genomic instability by mediating deacetylation and subsequent activation of DDX21, thereby overcoming R-loop-mediated stalling of RNA polymerases. In addition to protein deacetylase activity, also acts as a protein-lysine deacylase. Acts as a protein depropionylase by mediating depropionylation of Osterix (SP7), thereby regulating bone formation by osteoblasts. Acts as a histone deglutarylase by mediating deglutarylation of histone H4 on 'Lys-91' (H4K91glu); a mark that destabilizes nucleosomes by promoting dissociation of the H2A-H2B dimers from nucleosomes. Acts as a histone desuccinylase: in response to DNA damage, recruited to DNA double-strand breaks (DSBs) and catalyzes desuccinylation of histone H3 on 'Lys-122' (H3K122succ), thereby promoting chromatin condensation and DSB repair. Also promotes DSB repair by promoting H3K18Ac deacetylation, regulating non-homologous end joining (NHEJ). Along with its role in DNA repair, required for chromosome synapsis during prophase I of female meiosis by catalyzing H3K18Ac deacetylation. Involved in transcriptional repression of LINE-1 retrotransposon via H3K18Ac deacetylation, and promotes their association with the nuclear lamina. Required to stabilize ribosomal DNA (rDNA) heterochromatin and prevent cellular senescence induced by rDNA instability. Acts as a negative regulator of SIRT1 by preventing autodeacetylation of SIRT1, restricting SIRT1 deacetylase activity. The chain is NAD-dependent protein deacetylase sirtuin-7 from Rattus norvegicus (Rat).